We begin with the raw amino-acid sequence, 164 residues long: MPDTMLPACFLGLLAFSSACYFQNCPRGGKRAMSDLELRQCLPCGPGGKGRCFGPSICCADELGCFVGTAEALRCQEENYLPSPCQSGQKACGSGGRCAAFGVCCNDESCVTEPECREGFHRRARASDRSNATQLDGPAGALLLRLVQLAGAPEPFEPAQPDAY.

The signal sequence occupies residues 1-19 (MPDTMLPACFLGLLAFSSA). Cys20 and Cys25 form a disulfide bridge. A Glycine amide modification is found at Gly28. Cystine bridges form between Cys41–Cys85, Cys44–Cys58, Cys52–Cys75, Cys59–Cys65, Cys92–Cys104, Cys98–Cys116, and Cys105–Cys110. An N-linked (GlcNAc...) asparagine glycan is attached at Asn131.

It belongs to the vasopressin/oxytocin family. Interacts with vasopressin receptors V1bR/AVPR1B (Ki=85 pM), V1aR/AVPR1A (Ki=0.6 nM) and V2R/AVPR2 (Ki=4.9 nM). Interacts with oxytocin receptor (OXTR) (Ki=110 nM). In terms of assembly, (Microbial infection) May interact with SARS coronavirus-2/SARS-CoV-2; they may form a complex with secreted ACE2.

The protein localises to the secreted. In terms of biological role, specifically binds vasopressin. Functionally, has a direct antidiuretic action on the kidney, it also causes vasoconstriction of the peripheral vessels. Acts by binding to vasopressin receptors (V1bR/AVPR1B, V1aR/AVPR1A, and V2R/AVPR2). The polypeptide is Vasopressin-neurophysin 2-copeptin (AVP) (Homo sapiens (Human)).